A 612-amino-acid polypeptide reads, in one-letter code: Elongation factor 4 (612 aa).

The tr-type G domain maps to 11-193 (NHIRNFSIVA…KIVTDIPAPS (183 aa)). GTP contacts are provided by residues 23–28 (DHGKST) and 140–143 (NKID).

This sequence belongs to the TRAFAC class translation factor GTPase superfamily. Classic translation factor GTPase family. LepA subfamily.

The protein resides in the cell membrane. The catalysed reaction is GTP + H2O = GDP + phosphate + H(+). In terms of biological role, required for accurate and efficient protein synthesis under certain stress conditions. May act as a fidelity factor of the translation reaction, by catalyzing a one-codon backward translocation of tRNAs on improperly translocated ribosomes. Back-translocation proceeds from a post-translocation (POST) complex to a pre-translocation (PRE) complex, thus giving elongation factor G a second chance to translocate the tRNAs correctly. Binds to ribosomes in a GTP-dependent manner. This Lactobacillus acidophilus (strain ATCC 700396 / NCK56 / N2 / NCFM) protein is Elongation factor 4.